Here is a 176-residue protein sequence, read N- to C-terminus: Crossover junction endodeoxyribonuclease RuvC (176 aa).

Catalysis depends on residues D9, E69, and D141. D9, E69, and D141 together coordinate Mg(2+).

It belongs to the RuvC family. Homodimer which binds Holliday junction (HJ) DNA. The HJ becomes 2-fold symmetrical on binding to RuvC with unstacked arms; it has a different conformation from HJ DNA in complex with RuvA. In the full resolvosome a probable DNA-RuvA(4)-RuvB(12)-RuvC(2) complex forms which resolves the HJ. Mg(2+) serves as cofactor.

Its subcellular location is the cytoplasm. It catalyses the reaction Endonucleolytic cleavage at a junction such as a reciprocal single-stranded crossover between two homologous DNA duplexes (Holliday junction).. Functionally, the RuvA-RuvB-RuvC complex processes Holliday junction (HJ) DNA during genetic recombination and DNA repair. Endonuclease that resolves HJ intermediates. Cleaves cruciform DNA by making single-stranded nicks across the HJ at symmetrical positions within the homologous arms, yielding a 5'-phosphate and a 3'-hydroxyl group; requires a central core of homology in the junction. The consensus cleavage sequence is 5'-(A/T)TT(C/G)-3'. Cleavage occurs on the 3'-side of the TT dinucleotide at the point of strand exchange. HJ branch migration catalyzed by RuvA-RuvB allows RuvC to scan DNA until it finds its consensus sequence, where it cleaves and resolves the cruciform DNA. This is Crossover junction endodeoxyribonuclease RuvC from Chromobacterium violaceum (strain ATCC 12472 / DSM 30191 / JCM 1249 / CCUG 213 / NBRC 12614 / NCIMB 9131 / NCTC 9757 / MK).